A 936-amino-acid polypeptide reads, in one-letter code: Phosphoenolpyruvate carboxylase (936 aa).

Active-site residues include His155 and Lys595.

This sequence belongs to the PEPCase type 1 family. Homotetramer. Mg(2+) is required as a cofactor. Mn(2+) serves as cofactor.

It catalyses the reaction oxaloacetate + phosphate = phosphoenolpyruvate + hydrogencarbonate. Its activity is regulated as follows. Exhibits positive allosteric property with acetyl-CoA and fructose 1,6-bisphosphate, and a negative one with L-aspartate and L-malate. In terms of biological role, forms oxaloacetate, a four-carbon dicarboxylic acid source for the tricarboxylic acid cycle. This chain is Phosphoenolpyruvate carboxylase (ppc), found in Rhodothermus marinus (Rhodothermus obamensis).